Reading from the N-terminus, the 494-residue chain is Alpha-amylase-related protein (494 aa).

A signal peptide spans 1–20; sequence MIKFALALTLCLAGASLSLA. Residue Gln21 is modified to Pyrrolidone carboxylic acid. Cys48 and Cys104 form a disulfide bridge. Ca(2+) contacts are provided by Asn118, Gln169, and Asp178. A disulfide bridge connects residues Cys157 and Cys171. Arg206 serves as a coordination point for chloride. The active-site Nucleophile is Asp208. A Ca(2+)-binding site is contributed by His212. Catalysis depends on Glu245, which acts as the Proton donor. Chloride-binding residues include Asn308 and Arg343. Cystine bridges form between Cys376-Cys382, Cys418-Cys441, and Cys448-Cys460.

The protein belongs to the glycosyl hydrolase 13 family. In terms of assembly, monomer. The cofactor is Ca(2+). Requires chloride as cofactor.

It is found in the secreted. It carries out the reaction Endohydrolysis of (1-&gt;4)-alpha-D-glucosidic linkages in polysaccharides containing three or more (1-&gt;4)-alpha-linked D-glucose units.. The chain is Alpha-amylase-related protein (Amyrel) from Drosophila lini (Fruit fly).